We begin with the raw amino-acid sequence, 412 residues long: Translation initiation factor 2 subunit gamma (412 aa).

A tr-type G domain is found at 7–203; that stretch reads QPEVNIGLVG…AIESEIPTPD (197 aa). Residues 16-23 are G1; that stretch reads GHVDHGKT. The Mg(2+) site is built by D19, T23, G44, and S46. 19-24 is a GTP binding site; it reads DHGKTT. The tract at residues 44-48 is G2; it reads GISIR. The tract at residues 90 to 93 is G3; it reads DAPG. GTP is bound by residues 146-149 and 181-183; these read NKVD and SAQ. The interval 146-149 is G4; it reads NKVD. Positions 181–183 are G5; the sequence is SAQ.

Belongs to the TRAFAC class translation factor GTPase superfamily. Classic translation factor GTPase family. EIF2G subfamily. As to quaternary structure, heterotrimer composed of an alpha, a beta and a gamma chain. It depends on Mg(2+) as a cofactor.

It carries out the reaction GTP + H2O = GDP + phosphate + H(+). EIF-2 functions in the early steps of protein synthesis by forming a ternary complex with GTP and initiator tRNA. The protein is Translation initiation factor 2 subunit gamma of Halorubrum lacusprofundi (strain ATCC 49239 / DSM 5036 / JCM 8891 / ACAM 34).